A 242-amino-acid polypeptide reads, in one-letter code: Probable transcriptional regulatory protein BURPS1710b_1385 (242 aa).

This sequence belongs to the TACO1 family.

It localises to the cytoplasm. In Burkholderia pseudomallei (strain 1710b), this protein is Probable transcriptional regulatory protein BURPS1710b_1385.